Reading from the N-terminus, the 120-residue chain is Seripauperin-8 (120 aa).

An N-terminal signal peptide occupies residues 1–20; it reads MVKLTSIAAGVAAIAATASA.

The protein belongs to the SRP1/TIP1 family. Seripauperin subfamily.

This chain is Seripauperin-8 (PAU8), found in Saccharomyces cerevisiae (strain ATCC 204508 / S288c) (Baker's yeast).